The primary structure comprises 368 residues: Probable dual-specificity RNA methyltransferase RlmN (368 aa).

Catalysis depends on glutamate 109, which acts as the Proton acceptor. In terms of domain architecture, Radical SAM core spans 115–355 (YPDRVTMCIS…VTIRDTRGQE (241 aa)). Cysteine 122 and cysteine 360 form a disulfide bridge. The [4Fe-4S] cluster site is built by cysteine 129, cysteine 133, and cysteine 136. S-adenosyl-L-methionine-binding positions include 184–185 (GE), serine 218, 241–243 (SLH), and asparagine 317. Cysteine 360 functions as the S-methylcysteine intermediate in the catalytic mechanism.

The protein belongs to the radical SAM superfamily. RlmN family. [4Fe-4S] cluster is required as a cofactor.

Its subcellular location is the cytoplasm. The enzyme catalyses adenosine(2503) in 23S rRNA + 2 reduced [2Fe-2S]-[ferredoxin] + 2 S-adenosyl-L-methionine = 2-methyladenosine(2503) in 23S rRNA + 5'-deoxyadenosine + L-methionine + 2 oxidized [2Fe-2S]-[ferredoxin] + S-adenosyl-L-homocysteine. The catalysed reaction is adenosine(37) in tRNA + 2 reduced [2Fe-2S]-[ferredoxin] + 2 S-adenosyl-L-methionine = 2-methyladenosine(37) in tRNA + 5'-deoxyadenosine + L-methionine + 2 oxidized [2Fe-2S]-[ferredoxin] + S-adenosyl-L-homocysteine. Its function is as follows. Specifically methylates position 2 of adenine 2503 in 23S rRNA and position 2 of adenine 37 in tRNAs. This chain is Probable dual-specificity RNA methyltransferase RlmN, found in Streptomyces coelicolor (strain ATCC BAA-471 / A3(2) / M145).